The chain runs to 143 residues: Large ribosomal subunit protein uL11 (143 aa).

The protein belongs to the universal ribosomal protein uL11 family. As to quaternary structure, part of the ribosomal stalk of the 50S ribosomal subunit. Interacts with L10 and the large rRNA to form the base of the stalk. L10 forms an elongated spine to which L12 dimers bind in a sequential fashion forming a multimeric L10(L12)X complex. One or more lysine residues are methylated.

Its function is as follows. Forms part of the ribosomal stalk which helps the ribosome interact with GTP-bound translation factors. The chain is Large ribosomal subunit protein uL11 from Marinobacter nauticus (strain ATCC 700491 / DSM 11845 / VT8) (Marinobacter aquaeolei).